A 71-amino-acid chain; its full sequence is uncharacterized protein (71 aa).

Residues 12–34 (YLYNYFSSTTSWLVFIILSLDTI) form a helical membrane-spanning segment.

The protein localises to the membrane. This is an uncharacterized protein from Schizosaccharomyces pombe (strain 972 / ATCC 24843) (Fission yeast).